The sequence spans 283 residues: uncharacterized protein (283 aa).

Residues 1-21 (MKLKLKFLLISLLGSSLLLSA) form the signal peptide. The N-palmitoyl cysteine moiety is linked to residue Cys22. The S-diacylglycerol cysteine moiety is linked to residue Cys22.

The protein belongs to the MG439/MG440 family.

It localises to the cell membrane. This is an uncharacterized protein from Mycoplasma pneumoniae (strain ATCC 29342 / M129 / Subtype 1) (Mycoplasmoides pneumoniae).